The following is a 220-amino-acid chain: UPF0319 protein YccT (220 aa).

Residues methionine 1–alanine 20 form the signal peptide.

The protein belongs to the UPF0319 family.

The protein is UPF0319 protein YccT of Shigella flexneri serotype 5b (strain 8401).